The primary structure comprises 281 residues: MVEQLLLPLWNNLATVDDETLPLMSTALLIARDEYPDLDANLYDTLVQSYVEYLRSEVEEISLWPLKMAAVNRYLFQKLGYSGNHDEYYDPRNSYLNQVFERRLGNPISLAVIQIEVARRLGIPLDGVSFPGHFLVRLPVDDGILVMDPFNGGRPLDAEELRERARPHLGGEAPDDRALAQILNPAPHRTILVRILRNLHSVYANTDRWDRAARCADRILKLVPNQPEALRDRGLAYLQLGHRSGALNDLKRYLQLYPSTHNVDMVRGHLVDLSNERIQTH.

TPR repeat units follow at residues 193–226 and 227–260; these read VRIL…VPNQ and PEAL…YPST.

This sequence belongs to the UPF0162 family.

This is UPF0162 protein PD_0709 from Xylella fastidiosa (strain Temecula1 / ATCC 700964).